Here is a 465-residue protein sequence, read N- to C-terminus: Box C/D snoRNA protein 1 (465 aa).

The disordered stretch occupies residues 1-72 (MEFAAENEGK…GSRQRPEEIP (72 aa)). Position 25 is a phosphoserine (Ser25). Basic and acidic residues predominate over residues 56 to 70 (EIGDGEEGSRQRPEE). Residues Lys79, Lys108, Lys118, Lys138, Lys148, Lys157, Lys168, Lys178, and Lys195 each participate in a glycyl lysine isopeptide (Lys-Gly) (interchain with G-Cter in SUMO2) cross-link. Residues Cys215, Cys218, Cys227, Cys230, Cys235, Cys239, His243, and Cys249 each coordinate Zn(2+). The HIT-type zinc finger occupies 215-249 (CETCGTEEAKYRCPRCMRYSCSLPCVKKHKAELTC). Lys454 is covalently cross-linked (Glycyl lysine isopeptide (Lys-Gly) (interchain with G-Cter in SUMO2)).

The protein belongs to the BCD1 family. As to quaternary structure, interacts with FBL, SNU13, NOP58, NUFIP1, RUVBL1, RUVBL2 and TAF9. Interacts (via HIT-type zinc finger) with the RUVBL1/RUVBL2 complex in the presence of ADP.

Its function is as follows. Required for box C/D snoRNAs accumulation involved in snoRNA processing, snoRNA transport to the nucleolus and ribosome biogenesis. The protein is Box C/D snoRNA protein 1 (ZNHIT6) of Pongo abelii (Sumatran orangutan).